A 465-amino-acid polypeptide reads, in one-letter code: UDP-N-acetylmuramoylalanine--D-glutamate ligase (465 aa).

An ATP-binding site is contributed by glycine 127 to threonine 133.

Belongs to the MurCDEF family.

It localises to the cytoplasm. It carries out the reaction UDP-N-acetyl-alpha-D-muramoyl-L-alanine + D-glutamate + ATP = UDP-N-acetyl-alpha-D-muramoyl-L-alanyl-D-glutamate + ADP + phosphate + H(+). It participates in cell wall biogenesis; peptidoglycan biosynthesis. In terms of biological role, cell wall formation. Catalyzes the addition of glutamate to the nucleotide precursor UDP-N-acetylmuramoyl-L-alanine (UMA). The chain is UDP-N-acetylmuramoylalanine--D-glutamate ligase from Cereibacter sphaeroides (strain ATCC 17029 / ATH 2.4.9) (Rhodobacter sphaeroides).